Consider the following 273-residue polypeptide: NH(3)-dependent NAD(+) synthetase (273 aa).

46-53 (GISGGQDS) lines the ATP pocket. D52 is a binding site for Mg(2+). R139 contributes to the deamido-NAD(+) binding site. T159 serves as a coordination point for ATP. E164 is a binding site for Mg(2+). Deamido-NAD(+)-binding residues include K172 and D179. ATP is bound by residues K188 and T210. A deamido-NAD(+)-binding site is contributed by 259–260 (HK).

Belongs to the NAD synthetase family. Homodimer.

It catalyses the reaction deamido-NAD(+) + NH4(+) + ATP = AMP + diphosphate + NAD(+) + H(+). The protein operates within cofactor biosynthesis; NAD(+) biosynthesis; NAD(+) from deamido-NAD(+) (ammonia route): step 1/1. Its function is as follows. Catalyzes the ATP-dependent amidation of deamido-NAD to form NAD. Uses ammonia as a nitrogen source. This is NH(3)-dependent NAD(+) synthetase from Streptococcus agalactiae serotype Ia (strain ATCC 27591 / A909 / CDC SS700).